Reading from the N-terminus, the 463-residue chain is Cytochrome P450 4d8 (463 aa).

Residues Glu267 and Cys409 each contribute to the heme site.

It belongs to the cytochrome P450 family. Requires heme as cofactor.

The protein resides in the endoplasmic reticulum membrane. Its subcellular location is the microsome membrane. May be involved in the metabolism of insect hormones and in the breakdown of synthetic insecticides. The protein is Cytochrome P450 4d8 (Cyp4d8) of Drosophila melanogaster (Fruit fly).